We begin with the raw amino-acid sequence, 639 residues long: Centromere protein T (639 aa).

Disordered stretches follow at residues 1–64 (MDGR…RPNA), 266–294 (QLSD…GLVS), 307–451 (SEKD…ERGT), 458–477 (AAEE…ESEE), and 494–534 (QPVL…TREP). A compositionally biased stretch (low complexity) spans 12 to 23 (RAAPTPRVAVRS). Residues 80 to 500 (IIQNQPQVSP…YRPQPVLSPP (421 aa)) are flexible stalk domain. A compositionally biased stretch (polar residues) spans 267–281 (LSDSKTSAQRSNTSY). Composition is skewed to basic and acidic residues over residues 307–319 (SEKD…EHVD), 329–338 (QGEEEQDHSQ), 356–371 (TEHH…SEKK), and 432–449 (PGAK…EIER). Residues 458 to 469 (AAEEEATDDESD) are compositionally biased toward acidic residues.

It belongs to the CENP-T/CNN1 family. Component of the CENPA-CAD complex, composed of CENPI, CENPK, CENPL, CENPO, CENPP, CENPQ, CENPR and CENPS. The CENPA-CAD complex is probably recruited on centromeres by the CENPA-NAC complex, at least composed of CENPA, CENPC, CENPH, CENPM, CENPN, CENPT and CENPU. Identified in a centromeric complex containing histones H2A, H2B, H3 and H4, and at least CENPA, CENPB, CENPC, CENPT, CENPN, HJURP, SUPT16H, SSRP1 and RSF1. Interacts (via N-terminus) with the NDC80 complex. Heterodimer with CENPW; this dimer coassembles with CENPS-CENPX heterodimers at centromeres to form the tetrameric CENP-T-W-S-X complex.

It localises to the nucleus. It is found in the chromosome. The protein resides in the centromere. The protein localises to the kinetochore. In terms of biological role, component of the CENPA-NAC (nucleosome-associated) complex, a complex that plays a central role in assembly of kinetochore proteins, mitotic progression and chromosome segregation. The CENPA-NAC complex recruits the CENPA-CAD (nucleosome distal) complex and may be involved in incorporation of newly synthesized CENPA into centromeres. Part of a nucleosome-associated complex that binds specifically to histone H3-containing nucleosomes at the centromere, as opposed to nucleosomes containing CENPA. Component of the heterotetrameric CENP-T-W-S-X complex that binds and supercoils DNA, and plays an important role in kinetochore assembly. CENPT has a fundamental role in kinetochore assembly and function. It is one of the inner kinetochore proteins, with most further proteins binding downstream. Required for normal chromosome organization and normal progress through mitosis. The chain is Centromere protein T (CENPT) from Gallus gallus (Chicken).